The chain runs to 116 residues: Chaperone protein SicP (116 aa).

The protein belongs to the SicP family.

It localises to the cytoplasm. Its function is as follows. Molecular chaperone required for SptP stabilization and secretion. The sequence is that of Chaperone protein SicP (sicP) from Salmonella paratyphi A (strain ATCC 9150 / SARB42).